A 346-amino-acid polypeptide reads, in one-letter code: N-acetyl-gamma-glutamyl-phosphate reductase (346 aa).

Residue Cys149 is part of the active site.

Belongs to the NAGSA dehydrogenase family. Type 1 subfamily.

It localises to the cytoplasm. It carries out the reaction N-acetyl-L-glutamate 5-semialdehyde + phosphate + NADP(+) = N-acetyl-L-glutamyl 5-phosphate + NADPH + H(+). It functions in the pathway amino-acid biosynthesis; L-arginine biosynthesis; N(2)-acetyl-L-ornithine from L-glutamate: step 3/4. Catalyzes the NADPH-dependent reduction of N-acetyl-5-glutamyl phosphate to yield N-acetyl-L-glutamate 5-semialdehyde. This is N-acetyl-gamma-glutamyl-phosphate reductase from Micrococcus luteus (strain ATCC 4698 / DSM 20030 / JCM 1464 / CCM 169 / CCUG 5858 / IAM 1056 / NBRC 3333 / NCIMB 9278 / NCTC 2665 / VKM Ac-2230) (Micrococcus lysodeikticus).